The primary structure comprises 1110 residues: Ribosome assembly protein 1 (1110 aa).

The 246-residue stretch at 17-262 (SCIRNICIVA…QKLGAKRENL (246 aa)) folds into the tr-type G domain. GTP is bound by residues 26–33 (AHVDHGKT), 102–106 (DSPGH), and 156–159 (NKID). S431 carries the post-translational modification Phosphoserine.

Belongs to the TRAFAC class translation factor GTPase superfamily. Classic translation factor GTPase family.

The protein localises to the cytoplasm. It catalyses the reaction GTP + H2O = GDP + phosphate + H(+). Its activity is regulated as follows. GTPase activity is stimulated in the presence of 60S subunits. Its function is as follows. GTPase involved in the biogenesis of the 60S ribosomal subunit and translational activation of ribosomes. Together with SDO1, may trigger the GTP-dependent release of TIF6 from 60S pre-ribosomes in the cytoplasm, thereby activating ribosomes for translation competence by allowing 80S ribosome assembly and facilitating TIF6 recycling to the nucleus, where it is required for 60S rRNA processing and nuclear export. Inhibits GTPase activity of ribosome-bound EF-2. This chain is Ribosome assembly protein 1 (RIA1), found in Saccharomyces cerevisiae (strain ATCC 204508 / S288c) (Baker's yeast).